The primary structure comprises 311 residues: Malate dehydrogenase (311 aa).

Residues 7 to 13 and Asp34 contribute to the NAD(+) site; that span reads GAAGGIG. Residues Arg81 and Arg87 each coordinate substrate. NAD(+) is bound by residues Asn94 and 117–119; that span reads ITN. The substrate site is built by Asn119 and Arg153. His177 serves as the catalytic Proton acceptor. Met227 lines the NAD(+) pocket.

The protein belongs to the LDH/MDH superfamily. MDH type 1 family. Homodimer.

The enzyme catalyses (S)-malate + NAD(+) = oxaloacetate + NADH + H(+). In terms of biological role, catalyzes the reversible oxidation of malate to oxaloacetate. This is Malate dehydrogenase from Shewanella baltica (strain OS223).